Consider the following 96-residue polypeptide: Aspartyl/glutamyl-tRNA(Asn/Gln) amidotransferase subunit C (96 aa).

It belongs to the GatC family. In terms of assembly, heterotrimer of A, B and C subunits.

It carries out the reaction L-glutamyl-tRNA(Gln) + L-glutamine + ATP + H2O = L-glutaminyl-tRNA(Gln) + L-glutamate + ADP + phosphate + H(+). The enzyme catalyses L-aspartyl-tRNA(Asn) + L-glutamine + ATP + H2O = L-asparaginyl-tRNA(Asn) + L-glutamate + ADP + phosphate + 2 H(+). Its function is as follows. Allows the formation of correctly charged Asn-tRNA(Asn) or Gln-tRNA(Gln) through the transamidation of misacylated Asp-tRNA(Asn) or Glu-tRNA(Gln) in organisms which lack either or both of asparaginyl-tRNA or glutaminyl-tRNA synthetases. The reaction takes place in the presence of glutamine and ATP through an activated phospho-Asp-tRNA(Asn) or phospho-Glu-tRNA(Gln). This chain is Aspartyl/glutamyl-tRNA(Asn/Gln) amidotransferase subunit C, found in Herpetosiphon aurantiacus (strain ATCC 23779 / DSM 785 / 114-95).